A 616-amino-acid chain; its full sequence is Zinc metalloproteinase-disintegrin-like VLAIP-A (616 aa).

An N-terminal signal peptide occupies residues 1–20 (MMQVLLVTISLAVFPYQGSS). Residues 21-194 (IILESGNVND…KASQLNLTPE (174 aa)) constitute a propeptide that is removed on maturation. Pyrrolidone carboxylic acid is present on Gln195. Positions 203–399 (KYIKLVIVAD…KMPQCILNKP (197 aa)) constitute a Peptidase M12B domain. Intrachain disulfides connect Cys314-Cys394, Cys354-Cys378, and Cys356-Cys361. Residue His339 participates in Zn(2+) binding. The active site involves Glu340. Zn(2+) contacts are provided by His343 and His349. A glycan (N-linked (GlcNAc...) asparagine) is linked at Asn377. Residues 407-493 (PAVCGNYLVE…ECPTDQFQRN (87 aa)) form the Disintegrin domain. Residues Val409, Asn412, Leu414, Glu416, Glu419, and Asp422 each contribute to the Ca(2+) site. 14 cysteine pairs are disulfide-bonded: Cys410-Cys439, Cys421-Cys434, Cys423-Cys429, Cys433-Cys456, Cys447-Cys453, Cys452-Cys478, Cys465-Cys485, Cys472-Cys504, Cys497-Cys509, Cys516-Cys566, Cys531-Cys577, Cys544-Cys554, Cys561-Cys603, and Cys597-Cys609. A D/ECD-tripeptide motif is present at residues 471–473 (ECD).

Belongs to the venom metalloproteinase (M12B) family. P-III subfamily. P-IIIc sub-subfamily. As to quaternary structure, heterodimer; disulfide-linked. The cofactor is Zn(2+). The N-terminus is blocked. As to expression, expressed by the venom gland.

The protein resides in the secreted. With respect to regulation, inhibited by EDTA or 1,10-phenanthroline. Not inhibited by PMSF. In terms of biological role, snake venom zinc metalloprotease that hydrolyzes the alpha-chain (FGA) and more slowly the beta-chain (FGB) of fibrinogen, without affecting the gamma-chain. Cleaves alpha-chain of fibrinogen at '432-Lys-|-Leu-433' and '535-Pro-|-Met-536' bonds. Induces apoptosis in vascular endothelial cells and inhibits endothelial cell adhesion to extracellular matrix proteins such as fibrinogen, fibronectin, vitronectin, collagen I, and collagen IV. Also hydrolyzes azocasein, and insulin B-chain (at the '38-Ala-|-Leu-39' bond). This chain is Zinc metalloproteinase-disintegrin-like VLAIP-A, found in Macrovipera lebetinus (Levantine viper).